Reading from the N-terminus, the 49-residue chain is Large ribosomal subunit protein bL33 (49 aa).

Belongs to the bacterial ribosomal protein bL33 family.

This Pelotomaculum thermopropionicum (strain DSM 13744 / JCM 10971 / SI) protein is Large ribosomal subunit protein bL33.